Consider the following 264-residue polypeptide: Undecaprenyl-diphosphatase (264 aa).

8 helical membrane-spanning segments follow: residues 1-21 (MDIVHIIVLSLVQGITEFLPI), 39-59 (QGLAFDVAVHIGTLTAIVFYF), 83-103 (STLVWAVCFATIPAGIFGLAF), 113-133 (SGIVIAVTTIIFGVVLYLADK), 143-163 (VTIKLALIIGLAQALALIPGV), 181-201 (VGSANFSFLMSIPIILLAGGL), 220-240 (LAALISAVSAYICVKLFMSII), and 244-264 (SMTPFVVYRLILGVFLLFIFV).

The protein belongs to the UppP family.

It is found in the cell inner membrane. It catalyses the reaction di-trans,octa-cis-undecaprenyl diphosphate + H2O = di-trans,octa-cis-undecaprenyl phosphate + phosphate + H(+). Catalyzes the dephosphorylation of undecaprenyl diphosphate (UPP). Confers resistance to bacitracin. This chain is Undecaprenyl-diphosphatase, found in Campylobacter curvus (strain 525.92).